Here is a 366-residue protein sequence, read N- to C-terminus: Galactoside alpha-(1,2)-fucosyltransferase 1 (366 aa).

Over Met1 to His8 the chain is Cytoplasmic. A helical; Signal-anchor for type II membrane protein transmembrane segment spans residues Leu9–Phe25. Topologically, residues Leu26–Pro366 are lumenal. 3 N-linked (GlcNAc...) asparagine glycosylation sites follow: Asn66, Asn302, and Asn328.

This sequence belongs to the glycosyltransferase 11 family.

The protein resides in the golgi apparatus. It localises to the golgi stack membrane. It carries out the reaction a beta-D-galactosyl-(1-&gt;4)-N-acetyl-beta-D-glucosaminyl derivative + GDP-beta-L-fucose = an alpha-L-Fuc-(1-&gt;2)-beta-D-Gal-(1-&gt;4)-beta-D-GlcNAc derivative + GDP + H(+). It catalyses the reaction a ganglioside GA1 + GDP-beta-L-fucose = a ganglioside Fuc-GA1 + GDP + H(+). The catalysed reaction is a beta-D-Gal-(1-&gt;3)-beta-D-GlcNAc-(1-&gt;3)-beta-D-Gal-(1-&gt;4)-beta-D-Glc-(1&lt;-&gt;1')-Cer(d18:1(4E)) + GDP-beta-L-fucose = alpha-L-fucosyl-(1-&gt;2)- beta-D-galactosyl-(1-&gt;3)-N-acetyl-beta-D-glucosaminyl-(1-&gt;3)-beta-D-galactosyl-(1-&gt;4)-beta-D-glucosyl-(1&lt;-&gt;1')-N-acylsphing-4-enine + GDP + H(+). The enzyme catalyses a neolactoside nLc4Cer(d18:1(4E)) + GDP-beta-L-fucose = a neolactoside IV(2)-alpha-Fuc-nLc4Cer(d18:1(4E)) + GDP + H(+). It carries out the reaction a ganglioside GM1 + GDP-beta-L-fucose = a ganglioside Fuc-GM1 + GDP + H(+). It catalyses the reaction beta-D-galactosyl-(1-&gt;3)-N-acetyl-D-galactosamine + GDP-beta-L-fucose = alpha-L-fucosyl-(1-&gt;2)-beta-D-galactosyl-(1-&gt;3)-N-acetyl-D-galactosamine + GDP + H(+). The protein operates within protein modification; protein glycosylation. Catalyzes the transfer of L-fucose, from a guanosine diphosphate-beta-L-fucose, to the terminal galactose residue of glycoconjugates through an alpha(1,2) linkage leading to H antigen synthesis that is an intermediate substrate in the synthesis of ABO blood group antigens. H antigen is essential for maturation of the glomerular layer of the main olfactory bulb, in cell migration and early cell-cell contacts during tumor associated angiogenesis. Preferentially fucosylates soluble lactose and to a lesser extent fucosylates glycolipids gangliosides GA1 and GM1a. In Alouatta belzebul (Red-handed howler monkey), this protein is Galactoside alpha-(1,2)-fucosyltransferase 1.